The following is a 765-amino-acid chain: Probable ATP-dependent RNA helicase DDX27 (765 aa).

3 positions are modified to phosphoserine: Ser23, Ser25, and Ser48. Residues Leu43 to Thr63 show a composition bias toward acidic residues. Disordered stretches follow at residues Leu43–Ala83 and Lys111–Asp179. Positions Phe55 to Phe57 match the Required for interaction with the PEBOW complex motif. Residues Glu129 to Asp156 are compositionally biased toward basic and acidic residues. Residues Ser135 and Ser146 each carry the phosphoserine modification. Over residues Thr157–Glu172 the composition is skewed to acidic residues. The short motif at Lys164–Lys169 is the Nuclear localization signal element. Positions Leu187–Lys215 match the Q motif motif. Positions Ile218 to Ile392 constitute a Helicase ATP-binding domain. Ala231 to Thr238 is a binding site for ATP. A DEAD box motif is present at residues Asp340–Asp343. Residues Leu426 to Ile572 form the Helicase C-terminal domain. Residues Val716–Ser725 are compositionally biased toward basic residues.

The protein belongs to the DEAD box helicase family. DDX27/DRS1 subfamily. In terms of assembly, associates with PeBoW complex, composed of BOP1, PES1 and WDR12. Interacts directly with BOP1 and PES1.

Its subcellular location is the nucleus. The protein localises to the nucleolus. The protein resides in the chromosome. It catalyses the reaction ATP + H2O = ADP + phosphate + H(+). In terms of biological role, probable ATP-dependent RNA helicase. Component of the nucleolar ribosomal RNA (rRNA) processing machinery that regulates 3' end formation of ribosomal 47S rRNA. In Homo sapiens (Human), this protein is Probable ATP-dependent RNA helicase DDX27 (DDX27).